Consider the following 382-residue polypeptide: MAP kinase-activated protein kinase 3 (382 aa).

Residue M1 is modified to N-acetylmethionine. A disordered region spans residues 1 to 34; sequence MDGETAEEQGGPVPPPVAPGGPGLGGAPGGRREP. Over residues 20 to 29 the composition is skewed to gly residues; the sequence is GGPGLGGAPG. In terms of domain architecture, Protein kinase spans 44-304; the sequence is QLSKQVLGLG…ITQFMNHPWI (261 aa). ATP-binding positions include 50 to 58 and K73; that span reads LGLGVNGKV. D166 acts as the Proton acceptor in catalysis. T201 is subject to Phosphothreonine; by MAPK14. S251 is modified (phosphoserine; by MAPK14). A Phosphoserine; by autocatalysis modification is found at S307. Residues 307-343 are autoinhibitory helix; sequence SMVVPQTPLHTARVLQEDKDHWDEVKEEMTSALATMR. T313 is modified (phosphothreonine; by MAPK14). Positions 335–344 match the Nuclear export signal (NES) motif; it reads MTSALATMRV. The segment at 345-369 is p38 MAPK-binding site; it reads DYDQVKIKDLKTSNNRLLNKRRKKQ. 2 short sequence motifs (bipartite nuclear localization signal) span residues 350-353 and 364-368; these read KIKD and KRRKK. The interval 357-382 is disordered; sequence SNNRLLNKRRKKQAGSSSASQGCNNQ. Over residues 370 to 382 the composition is skewed to polar residues; that stretch reads AGSSSASQGCNNQ.

The protein belongs to the protein kinase superfamily. CAMK Ser/Thr protein kinase family. Heterodimer with p38-alpha/MAPK14. The heterodimer with p38-alpha/MAPK14 forms a stable complex: molecules are positioned 'face to face' so that the ATP-binding sites of both kinases are at the heterodimer interface. Interacts with TCF3 and with polycomb proteins, such as PCH2 and BMI1/PCGF4. Post-translationally, phosphorylated and activated by MAPK1/ERK2 and MAPK3/ERK1. Phosphorylated and activated by MAP kinase p38-alpha/MAPK14 at Thr-201, Ser-251 and Thr-313. In terms of tissue distribution, widely expressed, with a higher expression level observed in heart and skeletal muscle. No expression in brain. Expressed in the retinal pigment epithelium.

It is found in the nucleus. It localises to the cytoplasm. The enzyme catalyses L-seryl-[protein] + ATP = O-phospho-L-seryl-[protein] + ADP + H(+). It carries out the reaction L-threonyl-[protein] + ATP = O-phospho-L-threonyl-[protein] + ADP + H(+). Its activity is regulated as follows. Activated following phosphorylation by p38-alpha/MAPK14 following various stresses. Inhibited by ligand 5B (2'-[2-(1,3-benzodioxol-5-yl)pyrimidin-4-yl]-5',6'-dihydrospiro[piperidine-4,7'-pyrrolo[3,2-c]pyridin]- 4'(1'h)-one) and ligand P4O (2-[2-(2-fluorophenyl)pyridin-4-yl]-1,5,6,7-tetrahydro- 4h-pyrrolo[3,2-c]pyridin-4-one), 2 ATP-competitive inhibitors. In terms of biological role, stress-activated serine/threonine-protein kinase involved in cytokines production, endocytosis, cell migration, chromatin remodeling and transcriptional regulation. Following stress, it is phosphorylated and activated by MAP kinase p38-alpha/MAPK14, leading to phosphorylation of substrates. Phosphorylates serine in the peptide sequence, Hyd-X-R-X(2)-S, where Hyd is a large hydrophobic residue. MAPKAPK2 and MAPKAPK3, share the same function and substrate specificity, but MAPKAPK3 kinase activity and level in protein expression are lower compared to MAPKAPK2. Phosphorylates HSP27/HSPB1, KRT18, KRT20, RCSD1, RPS6KA3, TAB3 and TTP/ZFP36. Mediates phosphorylation of HSP27/HSPB1 in response to stress, leading to dissociate HSP27/HSPB1 from large small heat-shock protein (sHsps) oligomers and impair their chaperone activities and ability to protect against oxidative stress effectively. Involved in inflammatory response by regulating tumor necrosis factor (TNF) and IL6 production post-transcriptionally: acts by phosphorylating AU-rich elements (AREs)-binding proteins, such as TTP/ZFP36, leading to regulate the stability and translation of TNF and IL6 mRNAs. Phosphorylation of TTP/ZFP36, a major post-transcriptional regulator of TNF, promotes its binding to 14-3-3 proteins and reduces its ARE mRNA affinity leading to inhibition of dependent degradation of ARE-containing transcript. Involved in toll-like receptor signaling pathway (TLR) in dendritic cells: required for acute TLR-induced macropinocytosis by phosphorylating and activating RPS6KA3. Also acts as a modulator of Polycomb-mediated repression. This is MAP kinase-activated protein kinase 3 (MAPKAPK3) from Homo sapiens (Human).